We begin with the raw amino-acid sequence, 244 residues long: Ribonuclease PH (244 aa).

Phosphate-binding positions include Arg-90 and 128–130 (GTR).

The protein belongs to the RNase PH family. In terms of assembly, homohexameric ring arranged as a trimer of dimers.

It catalyses the reaction tRNA(n+1) + phosphate = tRNA(n) + a ribonucleoside 5'-diphosphate. Functionally, phosphorolytic 3'-5' exoribonuclease that plays an important role in tRNA 3'-end maturation. Removes nucleotide residues following the 3'-CCA terminus of tRNAs; can also add nucleotides to the ends of RNA molecules by using nucleoside diphosphates as substrates, but this may not be physiologically important. Probably plays a role in initiation of 16S rRNA degradation (leading to ribosome degradation) during starvation. The sequence is that of Ribonuclease PH from Prochlorococcus marinus (strain MIT 9313).